Here is a 64-residue protein sequence, read N- to C-terminus: Small cysteine-rich protein (64 aa).

Residues 1–17 (FVCVQARQIDPEQILRT) form the signal peptide. Positions 18–19 (PE) are excised as a propeptide.

Contains 4 disulfide bonds.

The protein resides in the secreted. It is found in the nematocyst. The polypeptide is Small cysteine-rich protein (Anemonia viridis (Snakelocks anemone)).